A 417-amino-acid chain; its full sequence is Serine hydroxymethyltransferase (417 aa).

(6S)-5,6,7,8-tetrahydrofolate contacts are provided by residues leucine 121 and 125-127; that span reads GHL. At lysine 229 the chain carries N6-(pyridoxal phosphate)lysine. Residue 355–357 participates in (6S)-5,6,7,8-tetrahydrofolate binding; it reads SPF.

It belongs to the SHMT family. In terms of assembly, homodimer. The cofactor is pyridoxal 5'-phosphate.

The protein resides in the cytoplasm. It catalyses the reaction (6R)-5,10-methylene-5,6,7,8-tetrahydrofolate + glycine + H2O = (6S)-5,6,7,8-tetrahydrofolate + L-serine. Its pathway is one-carbon metabolism; tetrahydrofolate interconversion. The protein operates within amino-acid biosynthesis; glycine biosynthesis; glycine from L-serine: step 1/1. In terms of biological role, catalyzes the reversible interconversion of serine and glycine with tetrahydrofolate (THF) serving as the one-carbon carrier. This reaction serves as the major source of one-carbon groups required for the biosynthesis of purines, thymidylate, methionine, and other important biomolecules. Also exhibits THF-independent aldolase activity toward beta-hydroxyamino acids, producing glycine and aldehydes, via a retro-aldol mechanism. The chain is Serine hydroxymethyltransferase from Shewanella baltica (strain OS223).